The sequence spans 253 residues: ABC transporter D-alanine-binding periplasmic protein (253 aa).

A signal peptide spans 1–22; it reads MLSKKFGLSMIVLGIMSSSAFA. Gly-95, Ser-97, Arg-102, Ala-147, and Glu-191 together coordinate D-alanine.

The protein belongs to the bacterial solute-binding protein 3 family. Monomer.

It localises to the periplasm. Its function is as follows. Part of the ABC transporter complex dalSTUV, that imports D-alanine into the cytoplasm. Helps protect the organism from oxidative killing by host neutrophils through sequestration of D-alanine, a substrate that is converted to hydrogen peroxide by the host enzyme DAO (D-amino acid oxidase). DalS shuttles D-alanine from the periplasm to the DalTUV complex situated in the inner membrane and through hydrolysis of ATP, D-alanine is transported across the membrane into the cytoplasm. Not required for the metabolism of D-alanine found in the stem peptide of peptidoglycan. This chain is ABC transporter D-alanine-binding periplasmic protein, found in Salmonella typhimurium (strain LT2 / SGSC1412 / ATCC 700720).